A 608-amino-acid polypeptide reads, in one-letter code: Malonate--CoA ligase (608 aa).

It belongs to the ATP-dependent AMP-binding enzyme family. As to expression, expressed in flowers.

It is found in the cytoplasm. The protein resides in the nucleus. The enzyme catalyses malonate + ATP + CoA = malonyl-CoA + AMP + diphosphate. Its function is as follows. Malonate--CoA ligase that catalyzes the formation of malonyl-CoA directly from malonate and CoA. May be required for the detoxification of malonate. The protein is Malonate--CoA ligase (AAE13) of Arabidopsis thaliana (Mouse-ear cress).